We begin with the raw amino-acid sequence, 257 residues long: Imidazole glycerol phosphate synthase subunit HisF (257 aa).

Residues aspartate 12 and aspartate 131 contribute to the active site.

The protein belongs to the HisA/HisF family. As to quaternary structure, heterodimer of HisH and HisF.

It is found in the cytoplasm. The catalysed reaction is 5-[(5-phospho-1-deoxy-D-ribulos-1-ylimino)methylamino]-1-(5-phospho-beta-D-ribosyl)imidazole-4-carboxamide + L-glutamine = D-erythro-1-(imidazol-4-yl)glycerol 3-phosphate + 5-amino-1-(5-phospho-beta-D-ribosyl)imidazole-4-carboxamide + L-glutamate + H(+). It functions in the pathway amino-acid biosynthesis; L-histidine biosynthesis; L-histidine from 5-phospho-alpha-D-ribose 1-diphosphate: step 5/9. Functionally, IGPS catalyzes the conversion of PRFAR and glutamine to IGP, AICAR and glutamate. The HisF subunit catalyzes the cyclization activity that produces IGP and AICAR from PRFAR using the ammonia provided by the HisH subunit. This is Imidazole glycerol phosphate synthase subunit HisF from Paraburkholderia phytofirmans (strain DSM 17436 / LMG 22146 / PsJN) (Burkholderia phytofirmans).